The following is a 464-amino-acid chain: Serine/threonine-protein kinase 38-like (464 aa).

N-acetylalanine is present on Ala-2. The interval 63-88 is S100B binding; sequence KKLRRSQHARKETEFLRLKRTRLGLD. Thr-75 bears the Phosphothreonine mark. One can recognise a Protein kinase domain in the interval 90-383; that stretch reads FESLKVIGRG…VEEIKGHPFF (294 aa). ATP contacts are provided by residues 96–104 and Lys-119; that span reads IGRGAFGEV. Residue Asp-213 is the Proton acceptor of the active site. The residue at position 282 (Ser-282) is a Phosphoserine; by autocatalysis. The AGC-kinase C-terminal domain maps to 384 to 453; sequence EGVDWEHIRE…KRFEGLTQRG (70 aa). The residue at position 442 (Thr-442) is a Phosphothreonine; by STK24/MST3.

The protein belongs to the protein kinase superfamily. AGC Ser/Thr protein kinase family. In terms of assembly, homodimeric S100B binds two molecules of STK38L. Interacts with MICAL1; leading to inhibit the protein kinase activity by antagonizing activation by MST1/STK4. Interacts with MOB1 and MOB2. It depends on Mg(2+) as a cofactor. As to expression, ubiquitously expressed with highest levels observed in the thymus.

It is found in the cytoplasm. It localises to the cytoskeleton. Its subcellular location is the membrane. It catalyses the reaction L-seryl-[protein] + ATP = O-phospho-L-seryl-[protein] + ADP + H(+). It carries out the reaction L-threonyl-[protein] + ATP = O-phospho-L-threonyl-[protein] + ADP + H(+). Activated by binding of S100B which releases autoinhibitory N-lobe interactions, enabling ATP to bind and the autophosphorylation of Ser-282. Thr-442 then undergoes calcium-dependent phosphorylation by STK24/MST3. Interactions between phosphorylated Thr-442 and the N-lobe promote additional structural changes that complete the activation of the kinase. Autoinhibition is also released by the binding of MOB1/MOBKL1A and MOB2/HCCA2 to the N-terminal of STK38L. Its function is as follows. Involved in the regulation of structural processes in differentiating and mature neuronal cells. This chain is Serine/threonine-protein kinase 38-like, found in Homo sapiens (Human).